Reading from the N-terminus, the 204-residue chain is uncharacterized protein (204 aa).

The first 17 residues, 1–17, serve as a signal peptide directing secretion; it reads MKRLVTGLLALSLFLAA. The interval 17 to 100 is disordered; sequence ACGQDSDQQK…NNNQANNNQK (84 aa). Cysteine 18 is lipidated: N-palmitoyl cysteine. Cysteine 18 carries the S-diacylglycerol cysteine lipid modification. Residues 23–70 are compositionally biased toward basic and acidic residues; the sequence is DQQKDGNKEKDDKAKTEQQDKKTNDSSKDKKDNKDDSKDVNKDNKDNS. Over residues 71–100 the composition is skewed to low complexity; the sequence is ANDNQQQSNSNATNNDQNQTNNNQANNNQK.

Its subcellular location is the cell membrane. This is an uncharacterized protein from Staphylococcus aureus (strain MSSA476).